The chain runs to 178 residues: 2-C-methyl-D-erythritol 2,4-cyclodiphosphate synthase (178 aa).

A divalent metal cation is bound by residues Asp24, His26, and His61. 24–26 (DSH) lines the 4-CDP-2-C-methyl-D-erythritol 2-phosphate pocket. 150 to 153 (TSGE) is a binding site for 4-CDP-2-C-methyl-D-erythritol 2-phosphate.

It belongs to the IspF family. Homotrimer. A divalent metal cation is required as a cofactor.

The enzyme catalyses 4-CDP-2-C-methyl-D-erythritol 2-phosphate = 2-C-methyl-D-erythritol 2,4-cyclic diphosphate + CMP. It functions in the pathway isoprenoid biosynthesis; isopentenyl diphosphate biosynthesis via DXP pathway; isopentenyl diphosphate from 1-deoxy-D-xylulose 5-phosphate: step 4/6. Its function is as follows. Involved in the biosynthesis of isopentenyl diphosphate (IPP) and dimethylallyl diphosphate (DMAPP), two major building blocks of isoprenoid compounds. Catalyzes the conversion of 4-diphosphocytidyl-2-C-methyl-D-erythritol 2-phosphate (CDP-ME2P) to 2-C-methyl-D-erythritol 2,4-cyclodiphosphate (ME-CPP) with a corresponding release of cytidine 5-monophosphate (CMP). This is 2-C-methyl-D-erythritol 2,4-cyclodiphosphate synthase from Chlamydia muridarum (strain MoPn / Nigg).